Here is a 180-residue protein sequence, read N- to C-terminus: Small ribosomal subunit protein eS10y (180 aa).

Residues 92–180 (LKKQQKPLGR…GGGAAGSDLP (89 aa)) are disordered. Basic and acidic residues predominate over residues 108–128 (DRPRGPPRGDGERRFGDRDGY). Residues 152-180 (FRGGAGGARQGFGRGAGGFGGGAAGSDLP) show a composition bias toward gly residues.

Belongs to the eukaryotic ribosomal protein eS10 family.

It localises to the cytoplasm. The chain is Small ribosomal subunit protein eS10y (RPS10B) from Arabidopsis thaliana (Mouse-ear cress).